Consider the following 107-residue polypeptide: Integration host factor subunit alpha (107 aa).

Belongs to the bacterial histone-like protein family. In terms of assembly, heterodimer of an alpha and a beta chain.

Its function is as follows. This protein is one of the two subunits of integration host factor, a specific DNA-binding protein that functions in genetic recombination as well as in transcriptional and translational control. In Brucella suis (strain ATCC 23445 / NCTC 10510), this protein is Integration host factor subunit alpha.